A 236-amino-acid chain; its full sequence is DNA repair protein RecO (236 aa).

The protein belongs to the RecO family.

Involved in DNA repair and RecF pathway recombination. The sequence is that of DNA repair protein RecO from Haemophilus influenzae (strain PittGG).